We begin with the raw amino-acid sequence, 201 residues long: CASP-like protein 1E1 (201 aa).

Topologically, residues 1 to 36 (MESQFRPGFDVSQGAGGRASKFGDVVAPTSSTQLPG) are cytoplasmic. Residues 37-57 (IILRIVAIVLTFISAVVMGAA) form a helical membrane-spanning segment. Topologically, residues 58-87 (RQTTTVTGIDAETALLTSITVTVKSTYSAA) are extracellular. The chain crosses the membrane as a helical span at residues 88–108 (YVYFVVANVLVFFYSVVSLVL). Over 109–127 (SMVNKARLTSMSLPFSIAD) the chain is Cytoplasmic. Residues 128 to 148 (LLMVVLLFSSNGAAAAISVVA) traverse the membrane as a helical segment. Topologically, residues 149–173 (EKGQQNLAGWDKICNLFGGLCARVN) are extracellular. A helical membrane pass occupies residues 174–194 (AAIVLSMLASVAYVILVVFGM). At 195–201 (ANLRRSQ) the chain is on the cytoplasmic side.

The protein belongs to the Casparian strip membrane proteins (CASP) family. As to quaternary structure, homodimer and heterodimers.

The protein localises to the cell membrane. This is CASP-like protein 1E1 from Musa acuminata (Banana).